A 336-amino-acid chain; its full sequence is Dihydroorotate dehydrogenase (quinone) (336 aa).

FMN is bound by residues 62-66 (AGLDK) and Thr86. Substrate is bound at residue Lys66. Residue 111 to 115 (NRMGF) participates in substrate binding. Positions 139 and 172 each coordinate FMN. Asn172 provides a ligand contact to substrate. Ser175 serves as the catalytic Nucleophile. Asn177 serves as a coordination point for substrate. Residues Lys217 and Thr245 each contribute to the FMN site. Position 246 to 247 (246 to 247 (NT)) interacts with substrate. Residues Gly268, Gly297, and 318–319 (YS) contribute to the FMN site.

It belongs to the dihydroorotate dehydrogenase family. Type 2 subfamily. As to quaternary structure, monomer. FMN serves as cofactor.

It localises to the cell membrane. It catalyses the reaction (S)-dihydroorotate + a quinone = orotate + a quinol. It functions in the pathway pyrimidine metabolism; UMP biosynthesis via de novo pathway; orotate from (S)-dihydroorotate (quinone route): step 1/1. Functionally, catalyzes the conversion of dihydroorotate to orotate with quinone as electron acceptor. This Hamiltonella defensa subsp. Acyrthosiphon pisum (strain 5AT) protein is Dihydroorotate dehydrogenase (quinone).